Consider the following 505-residue polypeptide: uncharacterized protein (505 aa).

The segment at 461 to 480 is disordered; that stretch reads RTDVHPGNSDDEGAYSSADS.

To M.jannaschii MJ0787.

This is an uncharacterized protein from Methanothermobacter thermautotrophicus (strain ATCC 29096 / DSM 1053 / JCM 10044 / NBRC 100330 / Delta H) (Methanobacterium thermoautotrophicum).